We begin with the raw amino-acid sequence, 312 residues long: Acetyl-coenzyme A carboxylase carboxyl transferase subunit alpha (312 aa).

The CoA carboxyltransferase C-terminal domain maps to 36 to 286 (RLDKEVKSIY…KEYFLDALRT (251 aa)).

Belongs to the AccA family. In terms of assembly, acetyl-CoA carboxylase is a heterohexamer composed of biotin carboxyl carrier protein (AccB), biotin carboxylase (AccC) and two subunits each of ACCase subunit alpha (AccA) and ACCase subunit beta (AccD).

It is found in the cytoplasm. The enzyme catalyses N(6)-carboxybiotinyl-L-lysyl-[protein] + acetyl-CoA = N(6)-biotinyl-L-lysyl-[protein] + malonyl-CoA. The protein operates within lipid metabolism; malonyl-CoA biosynthesis; malonyl-CoA from acetyl-CoA: step 1/1. Functionally, component of the acetyl coenzyme A carboxylase (ACC) complex. First, biotin carboxylase catalyzes the carboxylation of biotin on its carrier protein (BCCP) and then the CO(2) group is transferred by the carboxyltransferase to acetyl-CoA to form malonyl-CoA. The sequence is that of Acetyl-coenzyme A carboxylase carboxyl transferase subunit alpha from Helicobacter pylori (strain Shi470).